A 93-amino-acid chain; its full sequence is Co-chaperonin GroES (93 aa).

Belongs to the GroES chaperonin family. In terms of assembly, heptamer of 7 subunits arranged in a ring. Interacts with the chaperonin GroEL.

Its subcellular location is the cytoplasm. Together with the chaperonin GroEL, plays an essential role in assisting protein folding. The GroEL-GroES system forms a nano-cage that allows encapsulation of the non-native substrate proteins and provides a physical environment optimized to promote and accelerate protein folding. GroES binds to the apical surface of the GroEL ring, thereby capping the opening of the GroEL channel. In Streptococcus constellatus, this protein is Co-chaperonin GroES.